The sequence spans 312 residues: MLIRRPPDLLPSEITPEPLARGRRALLKGLGAGAALAGLGLPQISQAGSLGTLRPSPLSSDEKLTPLKSVTGYNNFYEFGTDKEDPARHAPGRLKTRPWTVTVEGEIKRPRTFSIDDLLKLAPLEERIYRMRCVEGWSMVIPWVGFPLAELIRQVEPNGQARFVEFVTLADPQQMPGVRSPLLDWPYVEGLRLDEAQHPLTLLAVGLYGEVLPAQNGAPIRLVVPWKYGFKSAKSIVRIRFVREQPRSTWMKAGPSEYGFYSNVNPAVDHPRWSQATERRIGEFIKRKTLPFNGYADQVAGLYSGMDLRRFF.

Positions 1–47 (MLIRRPPDLLPSEITPEPLARGRRALLKGLGAGAALAGLGLPQISQA) form a signal peptide, tat-type signal. Residues asparagine 74, 77 to 78 (YE), cysteine 133, threonine 168, asparagine 216, arginine 221, and 232 to 234 (SAK) contribute to the Mo-molybdopterin site.

Belongs to the MsrP family. As to quaternary structure, heterodimer of a catalytic subunit (MsrP) and a heme-binding subunit (MsrQ). Mo-molybdopterin is required as a cofactor. Post-translationally, predicted to be exported by the Tat system. The position of the signal peptide cleavage has not been experimentally proven.

The protein resides in the periplasm. The enzyme catalyses L-methionyl-[protein] + a quinone + H2O = L-methionyl-(R)-S-oxide-[protein] + a quinol. In terms of biological role, part of the MsrPQ system that repairs oxidized periplasmic proteins containing methionine sulfoxide residues (Met-O), using respiratory chain electrons. Thus protects these proteins from oxidative-stress damage caused by reactive species of oxygen and chlorine generated by the host defense mechanisms. MsrPQ is essential for the maintenance of envelope integrity under bleach stress, rescuing a wide series of structurally unrelated periplasmic proteins from methionine oxidation. The catalytic subunit MsrP is non-stereospecific, being able to reduce both (R-) and (S-) diastereoisomers of methionine sulfoxide. Involved in protection against reactive chlorine species (RCS) generated by chlorite and hypochlorite. This Azospira oryzae (strain ATCC BAA-33 / DSM 13638 / PS) (Dechlorosoma suillum) protein is Protein-methionine-sulfoxide reductase catalytic subunit MsrP.